A 603-amino-acid chain; its full sequence is Elongation factor 4 (603 aa).

Residues 7 to 189 (SRIRNFSIIA…SIVHLVPPPQ (183 aa)) form the tr-type G domain. GTP contacts are provided by residues 19 to 24 (DHGKST) and 136 to 139 (NKID).

It belongs to the TRAFAC class translation factor GTPase superfamily. Classic translation factor GTPase family. LepA subfamily.

The protein resides in the cell inner membrane. The enzyme catalyses GTP + H2O = GDP + phosphate + H(+). In terms of biological role, required for accurate and efficient protein synthesis under certain stress conditions. May act as a fidelity factor of the translation reaction, by catalyzing a one-codon backward translocation of tRNAs on improperly translocated ribosomes. Back-translocation proceeds from a post-translocation (POST) complex to a pre-translocation (PRE) complex, thus giving elongation factor G a second chance to translocate the tRNAs correctly. Binds to ribosomes in a GTP-dependent manner. This chain is Elongation factor 4, found in Cyanothece sp. (strain PCC 7425 / ATCC 29141).